The primary structure comprises 621 residues: Cryptochrome-1 (621 aa).

In terms of domain architecture, Photolyase/cryptochrome alpha/beta spans valine 3–leucine 132. 3 short sequence motifs (LIR) span residues asparagine 50 to phenylalanine 54, aspartate 82 to leucine 87, and lysine 151 to leucine 156. Serine 252 is an FAD binding site. Short sequence motifs (LIR) lie at residues leucine 255–leucine 260, aspartate 271–valine 276, serine 285–leucine 290, and threonine 335–tryptophan 339. Residue glutamine 289 participates in FAD binding. Histidine 355 is a binding site for FAD. The LIR 8 motif lies at lysine 379–leucine 384. Aspartate 387–aspartate 389 contributes to the FAD binding site. 5 consecutive short sequence motifs (LIR) follow at residues glycine 395–leucine 400, histidine 411–valine 416, arginine 430–valine 435, glutamine 486–leucine 491, and serine 492–leucine 497. Residues glutamine 581–asparagine 621 are disordered.

This sequence belongs to the DNA photolyase class-1 family. Component of the circadian core oscillator, which includes the CRY proteins, CLOCK or NPAS2, BMAL1 or BMAL2, CSNK1E, and the PER proteins. Requires FAD as cofactor. (6R)-5,10-methylene-5,6,7,8-tetrahydrofolate is required as a cofactor. As to expression, expressed in the pineal gland.

Its subcellular location is the cytoplasm. The protein localises to the nucleus. Transcriptional repressor which forms a core component of the circadian clock. The circadian clock, an internal time-keeping system, regulates various physiological processes through the generation of approximately 24 hour circadian rhythms in gene expression, which are translated into rhythms in metabolism and behavior. It is derived from the Latin roots 'circa' (about) and 'diem' (day) and acts as an important regulator of a wide array of physiological functions including metabolism, sleep, body temperature, blood pressure, endocrine, immune, cardiovascular, and renal function. Consists of two major components: the central clock, residing in the suprachiasmatic nucleus (SCN) of the brain, and the peripheral clocks that are present in nearly every tissue and organ system. Both the central and peripheral clocks can be reset by environmental cues, also known as Zeitgebers (German for 'timegivers'). The predominant Zeitgeber for the central clock is light, which is sensed by retina and signals directly to the SCN. The central clock entrains the peripheral clocks through neuronal and hormonal signals, body temperature and feeding-related cues, aligning all clocks with the external light/dark cycle. Circadian rhythms allow an organism to achieve temporal homeostasis with its environment at the molecular level by regulating gene expression to create a peak of protein expression once every 24 hours to control when a particular physiological process is most active with respect to the solar day. Transcription and translation of core clock components (CLOCK, NPAS2, BMAL1, BMAL2, PER1, PER2, PER3, CRY1 and CRY2) plays a critical role in rhythm generation, whereas delays imposed by post-translational modifications (PTMs) are important for determining the period (tau) of the rhythms (tau refers to the period of a rhythm and is the length, in time, of one complete cycle). A diurnal rhythm is synchronized with the day/night cycle, while the ultradian and infradian rhythms have a period shorter and longer than 24 hours, respectively. Disruptions in the circadian rhythms contribute to the pathology of cardiovascular diseases, cancer, metabolic syndromes and aging. A transcription/translation feedback loop (TTFL) forms the core of the molecular circadian clock mechanism. Transcription factors, CLOCK or NPAS2 and BMAL1 or BMAL2, form the positive limb of the feedback loop, act in the form of a heterodimer and activate the transcription of core clock genes and clock-controlled genes (involved in key metabolic processes), harboring E-box elements (5'-CACGTG-3') within their promoters. The core clock genes: PER1/2/3 and CRY1/2 which are transcriptional repressors form the negative limb of the feedback loop and interact with the CLOCK|NPAS2-BMAL1|BMAL2 heterodimer inhibiting its activity and thereby negatively regulating their own expression. This heterodimer also activates nuclear receptors NR1D1/2 and RORA/B/G, which form a second feedback loop and which activate and repress BMAL1 transcription, respectively. CRY1 and CRY2 have redundant functions but also differential and selective contributions at least in defining the pace of the SCN circadian clock and its circadian transcriptional outputs. More potent transcriptional repressor in cerebellum and liver than CRY2, though more effective in lengthening the period of the SCN oscillator. On its side, CRY2 seems to play a critical role in tuning SCN circadian period by opposing the action of CRY1. With CRY2, is dispensable for circadian rhythm generation but necessary for the development of intercellular networks for rhythm synchrony. Capable of translocating circadian clock core proteins such as PER proteins to the nucleus. Interacts with CLOCK-BMAL1 independently of PER proteins and is found at CLOCK-BMAL1-bound sites, suggesting that CRY may act as a molecular gatekeeper to maintain CLOCK-BMAL1 in a poised and repressed state until the proper time for transcriptional activation. Represses CLOCK-BMAL1-mediated transcriptional activation. The protein is Cryptochrome-1 (CRY1) of Gallus gallus (Chicken).